The following is a 357-amino-acid chain: Peptide chain release factor 1 (357 aa).

N5-methylglutamine is present on Gln234.

It belongs to the prokaryotic/mitochondrial release factor family. In terms of processing, methylated by PrmC. Methylation increases the termination efficiency of RF1.

The protein localises to the cytoplasm. In terms of biological role, peptide chain release factor 1 directs the termination of translation in response to the peptide chain termination codons UAG and UAA. The chain is Peptide chain release factor 1 (prfA) from Lactococcus lactis subsp. lactis (strain IL1403) (Streptococcus lactis).